A 504-amino-acid chain; its full sequence is Malonyl-CoA decarboxylase, mitochondrial (504 aa).

The transit peptide at 1 to 50 (MRGLRRGLSRLGPRLGPWAVPRSLRRVLRAAGPWRGQSSAGSVSERGGAS) directs the protein to the mitochondrion. The alpha-helical domain stretch occupies residues 51-201 (MEEVLSRSVP…VLKNMLSEWF (151 aa)). Residues 202–504 (STGFLNLERV…VSQFQQNSKL (303 aa)) form a catalytic domain region. Serine 340 serves as the catalytic Proton acceptor. Histidine 434 acts as the Proton donor in catalysis. The Microbody targeting signal signature appears at 502–504 (SKL).

It localises to the mitochondrion. It is found in the cytoplasm. The protein localises to the peroxisome. The catalysed reaction is malonyl-CoA + H(+) = acetyl-CoA + CO2. Its pathway is metabolic intermediate biosynthesis; acetyl-CoA biosynthesis; acetyl-CoA from malonyl-CoA: step 1/1. In terms of biological role, catalyzes the conversion of malonyl-CoA to acetyl-CoA. In the fatty acid biosynthesis MCD selectively removes malonyl-CoA and thus assures that methyl-malonyl-CoA is the only chain elongating substrate for fatty acid synthase and that fatty acids with multiple methyl side chains are produced. This Anser anser anser (Western greylag goose) protein is Malonyl-CoA decarboxylase, mitochondrial (MLYCD).